The chain runs to 31 residues: Jingzhaotoxin F7-15.33 (31 aa).

3 disulfide bridges follow: Cys2–Cys16, Cys9–Cys21, and Cys15–Cys28.

It belongs to the neurotoxin 10 (Hwtx-1) family. In terms of tissue distribution, expressed by the venom gland.

It localises to the secreted. Probable ion channel inhibitor. This is Jingzhaotoxin F7-15.33 from Chilobrachys guangxiensis (Chinese earth tiger tarantula).